The primary structure comprises 246 residues: 1-(5-phosphoribosyl)-5-[(5-phosphoribosylamino)methylideneamino] imidazole-4-carboxamide isomerase (246 aa).

D8 functions as the Proton acceptor in the catalytic mechanism. D131 (proton donor) is an active-site residue.

Belongs to the HisA/HisF family.

It localises to the cytoplasm. The catalysed reaction is 1-(5-phospho-beta-D-ribosyl)-5-[(5-phospho-beta-D-ribosylamino)methylideneamino]imidazole-4-carboxamide = 5-[(5-phospho-1-deoxy-D-ribulos-1-ylimino)methylamino]-1-(5-phospho-beta-D-ribosyl)imidazole-4-carboxamide. The protein operates within amino-acid biosynthesis; L-histidine biosynthesis; L-histidine from 5-phospho-alpha-D-ribose 1-diphosphate: step 4/9. The sequence is that of 1-(5-phosphoribosyl)-5-[(5-phosphoribosylamino)methylideneamino] imidazole-4-carboxamide isomerase from Polaromonas sp. (strain JS666 / ATCC BAA-500).